The sequence spans 602 residues: Glutamyl-tRNA(Gln) amidotransferase subunit B, mitochondrial (602 aa).

The protein belongs to the GatB/GatE family. GatB subfamily. In terms of assembly, subunit of the heterotrimeric GatCAB amidotransferase (AdT) complex, composed of A, B and C subunits.

Its subcellular location is the mitochondrion. It catalyses the reaction L-glutamyl-tRNA(Gln) + L-glutamine + ATP + H2O = L-glutaminyl-tRNA(Gln) + L-glutamate + ADP + phosphate + H(+). Functionally, allows the formation of correctly charged Gln-tRNA(Gln) through the transamidation of misacylated Glu-tRNA(Gln) in the mitochondria. The reaction takes place in the presence of glutamine and ATP through an activated gamma-phospho-Glu-tRNA(Gln). The polypeptide is Glutamyl-tRNA(Gln) amidotransferase subunit B, mitochondrial (Paracoccidioides lutzii (strain ATCC MYA-826 / Pb01) (Paracoccidioides brasiliensis)).